The primary structure comprises 158 residues: Endoribonuclease YbeY (158 aa).

Residues His118, His122, and His128 each contribute to the Zn(2+) site.

This sequence belongs to the endoribonuclease YbeY family. Zn(2+) is required as a cofactor.

The protein resides in the cytoplasm. In terms of biological role, single strand-specific metallo-endoribonuclease involved in late-stage 70S ribosome quality control and in maturation of the 3' terminus of the 16S rRNA. In Bartonella henselae (strain ATCC 49882 / DSM 28221 / CCUG 30454 / Houston 1) (Rochalimaea henselae), this protein is Endoribonuclease YbeY.